The following is a 663-amino-acid chain: Probable serine/threonine-protein kinase DDB_G0283301 (663 aa).

Residues 312–586 (IERRNELGRG…EECVERLITL (275 aa)) form the Protein kinase domain. Residues 318–326 (LGRGGNGTV) and K348 each bind ATP. D440 (proton acceptor) is an active-site residue.

It belongs to the protein kinase superfamily. Ser/Thr protein kinase family.

It carries out the reaction L-seryl-[protein] + ATP = O-phospho-L-seryl-[protein] + ADP + H(+). The enzyme catalyses L-threonyl-[protein] + ATP = O-phospho-L-threonyl-[protein] + ADP + H(+). The polypeptide is Probable serine/threonine-protein kinase DDB_G0283301 (Dictyostelium discoideum (Social amoeba)).